Reading from the N-terminus, the 49-residue chain is SPbeta prophage-derived uncharacterized protein YorN (49 aa).

This Bacillus subtilis (strain 168) protein is SPbeta prophage-derived uncharacterized protein YorN (yorN).